We begin with the raw amino-acid sequence, 440 residues long: Light-independent protochlorophyllide reductase subunit N (440 aa).

A disordered region spans residues 1–24 (MTCRPALSDSHPPEPGTPSSPSFG). Residues Cys42, Cys67, and Cys128 each contribute to the [4Fe-4S] cluster site.

Belongs to the BchN/ChlN family. As to quaternary structure, protochlorophyllide reductase is composed of three subunits; BchL, BchN and BchB. Forms a heterotetramer of two BchB and two BchN subunits. The cofactor is [4Fe-4S] cluster.

It catalyses the reaction chlorophyllide a + oxidized 2[4Fe-4S]-[ferredoxin] + 2 ADP + 2 phosphate = protochlorophyllide a + reduced 2[4Fe-4S]-[ferredoxin] + 2 ATP + 2 H2O. It participates in porphyrin-containing compound metabolism; bacteriochlorophyll biosynthesis (light-independent). In terms of biological role, component of the dark-operative protochlorophyllide reductase (DPOR) that uses Mg-ATP and reduced ferredoxin to reduce ring D of protochlorophyllide (Pchlide) to form chlorophyllide a (Chlide). This reaction is light-independent. The NB-protein (BchN-BchB) is the catalytic component of the complex. The sequence is that of Light-independent protochlorophyllide reductase subunit N from Rhodospirillum rubrum (strain ATCC 11170 / ATH 1.1.1 / DSM 467 / LMG 4362 / NCIMB 8255 / S1).